Reading from the N-terminus, the 673-residue chain is MPLPEPSEQDCESLRAGQEPSVGARKPQESSNLVPARDKERPKPTDVASQETSSTATLPNNTLQVAPVKKQGRIIHRKRSRVDAVPPQPLEFLKTPFGGRLLVHKSFLYKQEKAVGDKVYWKCRQHSELSCRGRAITRGFRVTEMRDHCHPPEKEGLDRKKRHRGRPPSSALPEGAEVQEDEVSLWLYPVEPEPTPQPSIETPEEEQGYRSLALQSLPPKKRPTPGVVRYRPLEFLKTCYGGTFLVHQSFLYKREKTVGGKVYWTCREHAVHGCRSRAITQGQRVTVMRSHCHSPDIEGLQARRQQEKTIKKIQARRIGAGDLEDCDDIEDSLLQGVDSLFYRRGQGTLTLSRSKSKSKSKSRSKSKSKSRSRSRKRAKKQQESSQEPPEEDQDVDPRGPEFLKTPLGGNFLVYESFLYRREKVAGEKVYWTCRDQARMGCRSRAITQGRQVTVMRSHCHPPDLLGLETLRQREKRPGPSQWDGPEGPEFLKTPLGGSFLVYESFLYRREKATGDKVYWTCRDQARMGCRSRAITQGQRVMVMRRHCHPPDMGGLEALRQRENFPNLTHWEGPEPLQPLEFLRTSLGGRFLVYESFLYRKEKAAGEKVYWMCRDQARLGCRSRAITQGRRVMVMRSHCHPPDLAGLEALRQREKAPSAAKKKKKKKKKKKGIH.

The segment at 1–62 (MPLPEPSEQD…SSTATLPNNT (62 aa)) is disordered. Serine 21 is subject to Phosphoserine. Positions 47–62 (VASQETSSTATLPNNT) are enriched in polar residues. 2 FLYWCH-type zinc fingers span residues 92-150 (FLKT…DHCH) and 235-293 (FLKT…SHCH). Residue lysine 110 forms a Glycyl lysine isopeptide (Lys-Gly) (interchain with G-Cter in SUMO2) linkage. Basic and acidic residues predominate over residues 147-158 (DHCHPPEKEGLD). The segment at 147–178 (DHCHPPEKEGLDRKKRHRGRPPSSALPEGAEV) is disordered. Phosphoserine is present on residues serine 294 and serine 339. The segment at 351-402 (LSRSKSKSKSKSRSKSKSKSRSRSRKRAKKQQESSQEPPEEDQDVDPRGPEF) is disordered. Positions 354 to 379 (SKSKSKSKSRSKSKSKSRSRSRKRAK) are enriched in basic residues. FLYWCH-type zinc fingers lie at residues 402–460 (FLKT…SHCH), 490–548 (FLKT…RHCH), and 581–639 (FLRT…SHCH). A disordered region spans residues 646–673 (LEALRQREKAPSAAKKKKKKKKKKKGIH). Positions 659–673 (AKKKKKKKKKKKGIH) are enriched in basic residues. A Glycyl lysine isopeptide (Lys-Gly) (interchain with G-Cter in SUMO2) cross-link involves residue lysine 666.

In terms of assembly, interacts with CTNNB1 (when unphosphorylated), perhaps preventing interaction of CTNNB1 with TCF4, and thereby regulating transcription activation; phosphorylation of CTNNB1 may inhibit the interaction.

It is found in the nucleus. Its subcellular location is the chromosome. The protein localises to the centromere. Functionally, transcription cofactor. Negatively regulates transcription activation by catenin beta-1 CTNNB1, perhaps acting by competing with TCF4 for CTNNB1 binding. May play a role in DNA-damage response signaling. Binds specifically to DNA sequences at peri-centromeric chromatin loci. This Mus musculus (Mouse) protein is FLYWCH-type zinc finger-containing protein 1 (Flywch1).